A 346-amino-acid polypeptide reads, in one-letter code: Histidinol-phosphate aminotransferase (346 aa).

Lys-209 carries the N6-(pyridoxal phosphate)lysine modification.

Belongs to the class-II pyridoxal-phosphate-dependent aminotransferase family. Histidinol-phosphate aminotransferase subfamily. Homodimer. It depends on pyridoxal 5'-phosphate as a cofactor.

It carries out the reaction L-histidinol phosphate + 2-oxoglutarate = 3-(imidazol-4-yl)-2-oxopropyl phosphate + L-glutamate. The protein operates within amino-acid biosynthesis; L-histidine biosynthesis; L-histidine from 5-phospho-alpha-D-ribose 1-diphosphate: step 7/9. This chain is Histidinol-phosphate aminotransferase, found in Aliivibrio fischeri (strain MJ11) (Vibrio fischeri).